A 415-amino-acid chain; its full sequence is Histidine--tRNA ligase (415 aa).

Belongs to the class-II aminoacyl-tRNA synthetase family. Homodimer.

The protein resides in the cytoplasm. The catalysed reaction is tRNA(His) + L-histidine + ATP = L-histidyl-tRNA(His) + AMP + diphosphate + H(+). This is Histidine--tRNA ligase from Phytoplasma australiense.